Consider the following 458-residue polypeptide: Probable M18 family aminopeptidase 1 (458 aa).

3 residues coordinate Zn(2+): H95, H170, and H434.

The protein belongs to the peptidase M18 family. It depends on Zn(2+) as a cofactor.

The protein is Probable M18 family aminopeptidase 1 of Borrelia garinii subsp. bavariensis (strain ATCC BAA-2496 / DSM 23469 / PBi) (Borreliella bavariensis).